A 416-amino-acid chain; its full sequence is Serine hydroxymethyltransferase (416 aa).

(6S)-5,6,7,8-tetrahydrofolate contacts are provided by residues Leu118 and 122-124; that span reads GHL. Residue Lys226 is modified to N6-(pyridoxal phosphate)lysine. Residues Glu242 and 350 to 352 contribute to the (6S)-5,6,7,8-tetrahydrofolate site; that span reads SPF.

Belongs to the SHMT family. Homodimer. Pyridoxal 5'-phosphate is required as a cofactor.

Its subcellular location is the cytoplasm. The enzyme catalyses (6R)-5,10-methylene-5,6,7,8-tetrahydrofolate + glycine + H2O = (6S)-5,6,7,8-tetrahydrofolate + L-serine. Its pathway is one-carbon metabolism; tetrahydrofolate interconversion. It participates in amino-acid biosynthesis; glycine biosynthesis; glycine from L-serine: step 1/1. Functionally, catalyzes the reversible interconversion of serine and glycine with tetrahydrofolate (THF) serving as the one-carbon carrier. This reaction serves as the major source of one-carbon groups required for the biosynthesis of purines, thymidylate, methionine, and other important biomolecules. Also exhibits THF-independent aldolase activity toward beta-hydroxyamino acids, producing glycine and aldehydes, via a retro-aldol mechanism. This Helicobacter pylori (strain ATCC 700392 / 26695) (Campylobacter pylori) protein is Serine hydroxymethyltransferase.